Here is a 305-residue protein sequence, read N- to C-terminus: 2-methoxy-6-polyprenyl-1,4-benzoquinol methylase, mitochondrial (305 aa).

Residues 1–34 (MSRLRAPVAKFLADGLKGIRSTALAGSRLSNCRY) constitute a mitochondrion transit peptide. S-adenosyl-L-methionine-binding positions include threonine 117, aspartate 143, and 173-174 (NA).

This sequence belongs to the class I-like SAM-binding methyltransferase superfamily. MenG/UbiE family. Component of a multi-subunit COQ enzyme complex, composed of at least COQ3, COQ4, COQ5, COQ6, COQ7 and COQ9.

Its subcellular location is the mitochondrion inner membrane. The catalysed reaction is 2-methoxy-6-(all-trans-decaprenyl)benzene-1,4-diol + S-adenosyl-L-methionine = 5-methoxy-2-methyl-3-(all-trans-decaprenyl)benzene-1,4-diol + S-adenosyl-L-homocysteine + H(+). The protein operates within cofactor biosynthesis; ubiquinone biosynthesis. Its function is as follows. Methyltransferase required for the conversion of 2-decaprenyl-6-methoxy-1,4-benzoquinol (DDMQH2) to 2-decaprenyl-3-methyl-6-methoxy-1,4-benzoquinol (DMQH2). The chain is 2-methoxy-6-polyprenyl-1,4-benzoquinol methylase, mitochondrial from Schizosaccharomyces pombe (strain 972 / ATCC 24843) (Fission yeast).